Here is a 165-residue protein sequence, read N- to C-terminus: Protein SprT (165 aa).

In terms of domain architecture, SprT-like spans 22-163 (LAQANLKLDR…RCVHCGEPLV (142 aa)). Residue His78 coordinates Zn(2+). Residue Glu79 is part of the active site. Residue His82 participates in Zn(2+) binding.

The protein belongs to the SprT family. The cofactor is Zn(2+).

The protein localises to the cytoplasm. The protein is Protein SprT of Salmonella paratyphi C (strain RKS4594).